Consider the following 300-residue polypeptide: Cation-efflux pump FieF (300 aa).

6 consecutive transmembrane segments (helical) span residues 12 to 32 (AAIAATAMASLLLLIKIFAWW), 39 to 59 (ILAALVDSLVDIGASLTNLLV), 82 to 102 (AALAQSMFISGSALFLFLTGI), 114 to 134 (PGVGIIVTIVALVCTILLVSF), 151 to 171 (MLHYQSDVMMNGAILLALALS), and 172 to 192 (WYGWHSADALFALGIGIYILY). Residues Asp45 and Asp49 each coordinate Zn(2+). Residues His153 and Asp157 each coordinate Zn(2+).

Belongs to the cation diffusion facilitator (CDF) transporter (TC 2.A.4) family. FieF subfamily. In terms of assembly, homodimer.

Its subcellular location is the cell inner membrane. It carries out the reaction Zn(2+)(in) + H(+)(out) = Zn(2+)(out) + H(+)(in). The enzyme catalyses Cd(2+)(in) + H(+)(out) = Cd(2+)(out) + H(+)(in). It catalyses the reaction Fe(2+)(in) + H(+)(out) = Fe(2+)(out) + H(+)(in). In terms of biological role, divalent metal cation transporter which exports Zn(2+), Cd(2+) and possibly Fe(2+). May be involved in zinc and iron detoxification by efflux. This chain is Cation-efflux pump FieF, found in Escherichia fergusonii (strain ATCC 35469 / DSM 13698 / CCUG 18766 / IAM 14443 / JCM 21226 / LMG 7866 / NBRC 102419 / NCTC 12128 / CDC 0568-73).